A 45-amino-acid polypeptide reads, in one-letter code: Scolopendra 20417.15 Da toxin (45 aa).

The tract at residues 26–45 (KVANGQEAGQPGAXNMKELH) is disordered.

This sequence belongs to the CRISP family. Venom allergen 5-like subfamily. Contains 3 disulfide bonds. Expressed by the venom gland.

The protein localises to the secreted. The protein is Scolopendra 20417.15 Da toxin of Scolopendra viridicornis nigra (Brazilian giant centipede).